Here is a 391-residue protein sequence, read N- to C-terminus: Erythronate-4-phosphate dehydrogenase (391 aa).

Residues Ser45 and Thr67 each contribute to the substrate site. Residues Asp147 and Thr176 each contribute to the NAD(+) site. Residue Arg209 is part of the active site. Asp238 is an NAD(+) binding site. Residue Glu243 is part of the active site. Residue His260 is the Proton donor of the active site. NAD(+) is bound at residue Gly263. Tyr264 contacts substrate.

The protein belongs to the D-isomer specific 2-hydroxyacid dehydrogenase family. PdxB subfamily. In terms of assembly, homodimer.

Its subcellular location is the cytoplasm. The enzyme catalyses 4-phospho-D-erythronate + NAD(+) = (R)-3-hydroxy-2-oxo-4-phosphooxybutanoate + NADH + H(+). It functions in the pathway cofactor biosynthesis; pyridoxine 5'-phosphate biosynthesis; pyridoxine 5'-phosphate from D-erythrose 4-phosphate: step 2/5. Catalyzes the oxidation of erythronate-4-phosphate to 3-hydroxy-2-oxo-4-phosphonooxybutanoate. The sequence is that of Erythronate-4-phosphate dehydrogenase from Photobacterium profundum (strain SS9).